The primary structure comprises 214 residues: uncharacterized protein (214 aa).

The next 7 membrane-spanning stretches (helical) occupy residues 4-23 (VSIVEIFLIISLPLLFFSSF), 35-57 (SFVHGAVLAVPLLLLRSFFLGYY), 67-89 (QWMRFFLFDYVFPLFCLPFFLFT), 96-118 (VSLVSGVSALFGAYTSFFFVHVY), 128-150 (ARVMTLVLYMTNLLQLHAHVSFS), 155-177 (LPLLGLIAALCIFLLMGAFSATV), and 187-209 (TVVYTSMLAGAGGVALLTHFFAV).

It is found in the cell membrane. This is an uncharacterized protein from Treponema pallidum (strain Nichols).